The chain runs to 300 residues: Transcription initiation factor IIB (300 aa).

The TFIIB-type zinc finger occupies 2–34 (TKQKVCPVCGSTEFIYDPERGEIVCARCGYVIE). C7, C10, C26, and C29 together coordinate Zn(2+). Repeat copies occupy residues 114–197 (SELD…ARNL) and 210–291 (DYVN…ELVE).

This sequence belongs to the TFIIB family.

Functionally, stabilizes TBP binding to an archaeal box-A promoter. Also responsible for recruiting RNA polymerase II to the pre-initiation complex (DNA-TBP-TFIIB). The protein is Transcription initiation factor IIB of Pyrococcus horikoshii (strain ATCC 700860 / DSM 12428 / JCM 9974 / NBRC 100139 / OT-3).